Consider the following 627-residue polypeptide: 1-deoxy-D-xylulose-5-phosphate synthase (627 aa).

Residues H74 and 115–117 contribute to the thiamine diphosphate site; that span reads GHA. Residue D146 participates in Mg(2+) binding. Thiamine diphosphate contacts are provided by residues 147-148, N175, F284, and E364; that span reads AA. Mg(2+) is bound at residue N175.

Belongs to the transketolase family. DXPS subfamily. As to quaternary structure, homodimer. Mg(2+) is required as a cofactor. The cofactor is thiamine diphosphate.

It catalyses the reaction D-glyceraldehyde 3-phosphate + pyruvate + H(+) = 1-deoxy-D-xylulose 5-phosphate + CO2. Its pathway is metabolic intermediate biosynthesis; 1-deoxy-D-xylulose 5-phosphate biosynthesis; 1-deoxy-D-xylulose 5-phosphate from D-glyceraldehyde 3-phosphate and pyruvate: step 1/1. Functionally, catalyzes the acyloin condensation reaction between C atoms 2 and 3 of pyruvate and glyceraldehyde 3-phosphate to yield 1-deoxy-D-xylulose-5-phosphate (DXP). The sequence is that of 1-deoxy-D-xylulose-5-phosphate synthase from Acidobacterium capsulatum (strain ATCC 51196 / DSM 11244 / BCRC 80197 / JCM 7670 / NBRC 15755 / NCIMB 13165 / 161).